Here is a 336-residue protein sequence, read N- to C-terminus: Holliday junction branch migration complex subunit RuvB (336 aa).

Residues 1-184 (MYDEERIVSG…FGIVGHMEYY (184 aa)) form a large ATPase domain (RuvB-L) region. ATP-binding positions include Leu-23, Arg-24, Gly-65, Lys-68, Thr-69, Thr-70, 131–133 (EDY), Arg-174, Tyr-184, and Arg-221. Position 69 (Thr-69) interacts with Mg(2+). The small ATPAse domain (RuvB-S) stretch occupies residues 185 to 255 (NEVDLSQIIK…IVQFALDLLR (71 aa)). Residues 258 to 336 (KVGLDRTDRK…HLGIKYNKEG (79 aa)) are head domain (RuvB-H). Residues Arg-313 and Arg-318 each contribute to the DNA site.

The protein belongs to the RuvB family. In terms of assembly, homohexamer. Forms an RuvA(8)-RuvB(12)-Holliday junction (HJ) complex. HJ DNA is sandwiched between 2 RuvA tetramers; dsDNA enters through RuvA and exits via RuvB. An RuvB hexamer assembles on each DNA strand where it exits the tetramer. Each RuvB hexamer is contacted by two RuvA subunits (via domain III) on 2 adjacent RuvB subunits; this complex drives branch migration. In the full resolvosome a probable DNA-RuvA(4)-RuvB(12)-RuvC(2) complex forms which resolves the HJ.

It localises to the cytoplasm. The catalysed reaction is ATP + H2O = ADP + phosphate + H(+). Functionally, the RuvA-RuvB-RuvC complex processes Holliday junction (HJ) DNA during genetic recombination and DNA repair, while the RuvA-RuvB complex plays an important role in the rescue of blocked DNA replication forks via replication fork reversal (RFR). RuvA specifically binds to HJ cruciform DNA, conferring on it an open structure. The RuvB hexamer acts as an ATP-dependent pump, pulling dsDNA into and through the RuvAB complex. RuvB forms 2 homohexamers on either side of HJ DNA bound by 1 or 2 RuvA tetramers; 4 subunits per hexamer contact DNA at a time. Coordinated motions by a converter formed by DNA-disengaged RuvB subunits stimulates ATP hydrolysis and nucleotide exchange. Immobilization of the converter enables RuvB to convert the ATP-contained energy into a lever motion, pulling 2 nucleotides of DNA out of the RuvA tetramer per ATP hydrolyzed, thus driving DNA branch migration. The RuvB motors rotate together with the DNA substrate, which together with the progressing nucleotide cycle form the mechanistic basis for DNA recombination by continuous HJ branch migration. Branch migration allows RuvC to scan DNA until it finds its consensus sequence, where it cleaves and resolves cruciform DNA. This is Holliday junction branch migration complex subunit RuvB from Ligilactobacillus salivarius (strain UCC118) (Lactobacillus salivarius).